A 307-amino-acid chain; its full sequence is UPF0282 protein PH1002 (307 aa).

The protein belongs to the UPF0282 family.

The protein is UPF0282 protein PH1002 of Pyrococcus horikoshii (strain ATCC 700860 / DSM 12428 / JCM 9974 / NBRC 100139 / OT-3).